A 517-amino-acid chain; its full sequence is Ribonuclease Y (517 aa).

A helical membrane pass occupies residues 1–21 (MIESLIALIAAIVGLGIGYLV). Positions 207-273 (LINVINIKND…TKVIELLVED (67 aa)) constitute a KH domain. Residues 333–426 (ALAHSLEVAH…VCAADTLSAA (94 aa)) form the HD domain.

It belongs to the RNase Y family.

Its subcellular location is the cell membrane. Endoribonuclease that initiates mRNA decay. The chain is Ribonuclease Y from Campylobacter jejuni subsp. doylei (strain ATCC BAA-1458 / RM4099 / 269.97).